The sequence spans 419 residues: Divergent protein kinase domain 1C (419 aa).

Residues 1–22 (MARAAGARGPAGWCRRRGRCGR) are Cytoplasmic-facing. Residues 16–17 (RR) carry the May mediate ER retention motif. A helical transmembrane segment spans residues 23 to 43 (GTLLAFAAWTAGWVLAAALLL). Topologically, residues 44 to 419 (RAHPGVLSER…TLRELQEAEK (376 aa)) are lumenal.

It belongs to the DIPK family. Post-translationally, among the many cysteines in the lumenal domain, most are probably involved in disulfide bonds.

It localises to the endoplasmic reticulum membrane. This Homo sapiens (Human) protein is Divergent protein kinase domain 1C.